The sequence spans 658 residues: Protein kinase and PP2C-like domain-containing protein (658 aa).

Residues 30–314 (FTLLSPIAKG…DNVVLELESI (285 aa)) form the Protein kinase domain. ATP contacts are provided by residues 36–44 (IAKGSESVV) and Lys57. Asp149 functions as the Proton acceptor in the catalytic mechanism. The 257-residue stretch at 392–648 (SCGSFATCGR…DNITVIVVFL (257 aa)) folds into the PPM-type phosphatase domain. Mn(2+)-binding residues include Asp428, Gly429, Asp599, and Asp639.

This sequence in the N-terminal section; belongs to the protein kinase superfamily. Ser/Thr protein kinase family. The protein in the C-terminal section; belongs to the PP2C family. Requires Mg(2+) as cofactor. Mn(2+) serves as cofactor.

It carries out the reaction L-seryl-[protein] + ATP = O-phospho-L-seryl-[protein] + ADP + H(+). The enzyme catalyses L-threonyl-[protein] + ATP = O-phospho-L-threonyl-[protein] + ADP + H(+). The catalysed reaction is O-phospho-L-seryl-[protein] + H2O = L-seryl-[protein] + phosphate. It catalyses the reaction O-phospho-L-threonyl-[protein] + H2O = L-threonyl-[protein] + phosphate. In Arabidopsis thaliana (Mouse-ear cress), this protein is Protein kinase and PP2C-like domain-containing protein.